Here is a 384-residue protein sequence, read N- to C-terminus: Cobalt-precorrin-5B C(1)-methyltransferase (384 aa).

The protein belongs to the CbiD family.

The catalysed reaction is Co-precorrin-5B + S-adenosyl-L-methionine = Co-precorrin-6A + S-adenosyl-L-homocysteine. It participates in cofactor biosynthesis; adenosylcobalamin biosynthesis; cob(II)yrinate a,c-diamide from sirohydrochlorin (anaerobic route): step 6/10. Functionally, catalyzes the methylation of C-1 in cobalt-precorrin-5B to form cobalt-precorrin-6A. In Ruminiclostridium cellulolyticum (strain ATCC 35319 / DSM 5812 / JCM 6584 / H10) (Clostridium cellulolyticum), this protein is Cobalt-precorrin-5B C(1)-methyltransferase.